The chain runs to 246 residues: Serine protease 1 (246 aa).

Positions 1–15 (MSALLILALVGAAVA) are cleaved as a signal peptide. Residues 16–23 (FPLEDDDK) constitute a propeptide, activation peptide. In terms of domain architecture, Peptidase S1 spans 24–244 (IVGGYTCPEH…FVGWIQDTIA (221 aa)). 6 cysteine pairs are disulfide-bonded: cysteine 30/cysteine 160, cysteine 48/cysteine 64, cysteine 132/cysteine 233, cysteine 139/cysteine 206, cysteine 171/cysteine 185, and cysteine 196/cysteine 220. The active-site Charge relay system is histidine 63. Glutamate 75, asparagine 77, valine 80, and glutamate 85 together coordinate Ca(2+). The Charge relay system role is filled by aspartate 107. Catalysis depends on serine 200, which acts as the Charge relay system.

It belongs to the peptidase S1 family. Interacts with SERPINA1. It depends on Ca(2+) as a cofactor.

It is found in the secreted. The protein resides in the extracellular space. The enzyme catalyses Preferential cleavage: Arg-|-Xaa, Lys-|-Xaa.. The sequence is that of Serine protease 1 from Rattus norvegicus (Rat).